Reading from the N-terminus, the 366-residue chain is Putative neutrophil cytosol factor 1C (366 aa).

The PX domain maps to 1 to 101 (MYMFLVKWQD…DFFKVRPDDL (101 aa)). SH3 domains lie at 132–191 (IILQ…PLDS) and 202–261 (YAGE…KSGQ). Residues 261–366 (QDVSQAQRQI…STKRKLASAV (106 aa)) are disordered. Residues serine 279 and serine 280 each carry the phosphoserine modification. Residues 285–294 (HSIHQRSRKR) show a composition bias toward basic residues. 4 positions are modified to phosphoserine: serine 296, serine 304, serine 321, and serine 324.

It is found in the cytoplasm. Its function is as follows. May be required for activation of the latent NADPH oxidase (necessary for superoxide production). This Homo sapiens (Human) protein is Putative neutrophil cytosol factor 1C (NCF1C).